The chain runs to 95 residues: Large ribosomal subunit protein bL25 (95 aa).

It belongs to the bacterial ribosomal protein bL25 family. As to quaternary structure, part of the 50S ribosomal subunit; part of the 5S rRNA/L5/L18/L25 subcomplex. Contacts the 5S rRNA. Binds to the 5S rRNA independently of L5 and L18.

This is one of the proteins that binds to the 5S RNA in the ribosome where it forms part of the central protuberance. The chain is Large ribosomal subunit protein bL25 from Shewanella oneidensis (strain ATCC 700550 / JCM 31522 / CIP 106686 / LMG 19005 / NCIMB 14063 / MR-1).